A 315-amino-acid chain; its full sequence is Protein rlx (315 aa).

A disordered region spans residues 263 to 315 (TEQLKQRRVERAQETKQAHSKISSRDTRESENQRERAKGNNIRIERGDEGLSR).

In terms of biological role, this protein is probably required for relaxation complex formation and plasmid mobilization by conjugative plasmids. This Staphylococcus aureus protein is Protein rlx (rlx).